The chain runs to 264 residues: Phosphatidylglycerol--prolipoprotein diacylglyceryl transferase (264 aa).

The next 3 helical transmembrane spans lie at leucine 17 to alanine 37, leucine 59 to tyrosine 79, and tryptophan 95 to phenylalanine 115. An a 1,2-diacyl-sn-glycero-3-phospho-(1'-sn-glycerol)-binding site is contributed by arginine 142. The next 2 membrane-spanning stretches (helical) occupy residues glycine 205 to phenylalanine 225 and methionine 241 to glycine 261.

Belongs to the Lgt family.

The protein localises to the cell inner membrane. It carries out the reaction L-cysteinyl-[prolipoprotein] + a 1,2-diacyl-sn-glycero-3-phospho-(1'-sn-glycerol) = an S-1,2-diacyl-sn-glyceryl-L-cysteinyl-[prolipoprotein] + sn-glycerol 1-phosphate + H(+). Its pathway is protein modification; lipoprotein biosynthesis (diacylglyceryl transfer). Functionally, catalyzes the transfer of the diacylglyceryl group from phosphatidylglycerol to the sulfhydryl group of the N-terminal cysteine of a prolipoprotein, the first step in the formation of mature lipoproteins. The sequence is that of Phosphatidylglycerol--prolipoprotein diacylglyceryl transferase from Methylibium petroleiphilum (strain ATCC BAA-1232 / LMG 22953 / PM1).